The primary structure comprises 75 residues: Protein BsdD (75 aa).

In terms of biological role, involved in the non-oxidative decarboxylation and detoxification of phenolic derivatives under both aerobic and anaerobic conditions, however the precise biochemical function of BsdD in metabolism of phenolic acid is unknown. The protein is Protein BsdD of Bacillus subtilis (strain 168).